A 603-amino-acid polypeptide reads, in one-letter code: DNA mismatch repair protein MutL (603 aa).

A compositionally biased stretch (basic and acidic residues) spans 336–346 (EVSKKQKEQQK). Disordered regions lie at residues 336 to 355 (EVSK…MSFE) and 361 to 384 (KETP…DTSR).

This sequence belongs to the DNA mismatch repair MutL/HexB family.

Functionally, this protein is involved in the repair of mismatches in DNA. It is required for dam-dependent methyl-directed DNA mismatch repair. May act as a 'molecular matchmaker', a protein that promotes the formation of a stable complex between two or more DNA-binding proteins in an ATP-dependent manner without itself being part of a final effector complex. In Listeria welshimeri serovar 6b (strain ATCC 35897 / DSM 20650 / CCUG 15529 / CIP 8149 / NCTC 11857 / SLCC 5334 / V8), this protein is DNA mismatch repair protein MutL.